Consider the following 248-residue polypeptide: 2,3-bisphosphoglycerate-dependent phosphoglycerate mutase (248 aa).

Residues 8–15, 21–22, Arg60, 87–90, Lys98, 114–115, and 183–184 contribute to the substrate site; these read RHGESVWN, TG, ERHY, RR, and GN. The Tele-phosphohistidine intermediate role is filled by His9. Glu87 (proton donor/acceptor) is an active-site residue.

This sequence belongs to the phosphoglycerate mutase family. BPG-dependent PGAM subfamily.

The enzyme catalyses (2R)-2-phosphoglycerate = (2R)-3-phosphoglycerate. It functions in the pathway carbohydrate degradation; glycolysis; pyruvate from D-glyceraldehyde 3-phosphate: step 3/5. Its function is as follows. Catalyzes the interconversion of 2-phosphoglycerate and 3-phosphoglycerate. This chain is 2,3-bisphosphoglycerate-dependent phosphoglycerate mutase, found in Brachyspira hyodysenteriae (strain ATCC 49526 / WA1).